We begin with the raw amino-acid sequence, 355 residues long: Mitochondrial import inner membrane translocase subunit TIM50 (355 aa).

The transit peptide at 1 to 44 (MAASAAVFLRLRSGLRQGARGLCARLATPPPRAPDQAAEIGSRA) directs the protein to the mitochondrion. Positions 25 to 61 (RLATPPPRAPDQAAEIGSRAGTKAQTQGPQQQRSSEG) are disordered. Over 45-67 (GTKAQTQGPQQQRSSEGPSYAKK) the chain is Mitochondrial matrix. Polar residues predominate over residues 47–61 (KAQTQGPQQQRSSEG). A helical membrane pass occupies residues 68-88 (VALWLARLLGAGGTVSVIYIF). The Mitochondrial intermembrane segment spans residues 89–355 (GNNAVDENGA…SRLWPRSKQP (267 aa)). The region spanning 145 to 288 (YYQPPYTLVL…LDLSAFLKTI (144 aa)) is the FCP1 homology domain. Ser343 carries the post-translational modification Phosphoserine.

It belongs to the TIM50 family. Component of the TIM23 complex at least composed of TIMM23, TIMM17 (TIMM17A or TIMM17B) and TIMM50; within this complex, directly interacts with TIMM23. The complex interacts with the TIMM44 component of the PAM complex and with DNAJC15.

It is found in the mitochondrion inner membrane. In terms of biological role, essential component of the TIM23 complex, a complex that mediates the translocation of transit peptide-containing proteins across the mitochondrial inner membrane. Has some phosphatase activity in vitro; however such activity may not be relevant in vivo. This chain is Mitochondrial import inner membrane translocase subunit TIM50 (TIMM50), found in Bos taurus (Bovine).